Consider the following 588-residue polypeptide: Proteasome-associated ATPase (588 aa).

Positions 1–10 (MAAHDDDMNR) are enriched in basic and acidic residues. The tract at residues 1–23 (MAAHDDDMNRGIRPGRGSDDPAG) is disordered. The stretch at 47 to 94 (RILEERIVELQTNLAGVSAQNERLANTLREARDQIVALKEEVDRLAQP) forms a coiled coil. Residue 276 to 281 (GCGKTL) participates in ATP binding. A docks into pockets in the proteasome alpha-ring region spans residues 587 to 588 (YL).

The protein belongs to the AAA ATPase family. In terms of assembly, homohexamer. Assembles into a hexameric ring structure that caps the 20S proteasome core. Strongly interacts with the prokaryotic ubiquitin-like protein Pup through a hydrophobic interface; the interacting region of ARC lies in its N-terminal coiled-coil domain. There is one Pup binding site per ARC hexamer ring. Upon ATP-binding, the C-terminus of ARC interacts with the alpha-rings of the proteasome core, possibly by binding to the intersubunit pockets.

It functions in the pathway protein degradation; proteasomal Pup-dependent pathway. Functionally, ATPase which is responsible for recognizing, binding, unfolding and translocation of pupylated proteins into the bacterial 20S proteasome core particle. May be essential for opening the gate of the 20S proteasome via an interaction with its C-terminus, thereby allowing substrate entry and access to the site of proteolysis. Thus, the C-termini of the proteasomal ATPase may function like a 'key in a lock' to induce gate opening and therefore regulate proteolysis. This chain is Proteasome-associated ATPase, found in Streptomyces avermitilis (strain ATCC 31267 / DSM 46492 / JCM 5070 / NBRC 14893 / NCIMB 12804 / NRRL 8165 / MA-4680).